The sequence spans 513 residues: Cytochrome P450 1A2 (513 aa).

Serine 68 carries O-linked (GlcNAc) serine glycosylation. Position 225 (phenylalanine 225) interacts with substrate. Cysteine 456 serves as a coordination point for heme.

It belongs to the cytochrome P450 family. Interacts with PGRMC1; the interaction requires PGRMC1 homodimerization. The cofactor is heme. In terms of tissue distribution, found in lung and liver.

It is found in the endoplasmic reticulum membrane. Its subcellular location is the microsome membrane. It carries out the reaction an organic molecule + reduced [NADPH--hemoprotein reductase] + O2 = an alcohol + oxidized [NADPH--hemoprotein reductase] + H2O + H(+). The enzyme catalyses 17beta-estradiol + reduced [NADPH--hemoprotein reductase] + O2 = 2-hydroxy-17beta-estradiol + oxidized [NADPH--hemoprotein reductase] + H2O + H(+). The catalysed reaction is 17beta-estradiol + reduced [NADPH--hemoprotein reductase] + O2 = 4-hydroxy-17beta-estradiol + oxidized [NADPH--hemoprotein reductase] + H2O + H(+). It catalyses the reaction estrone + reduced [NADPH--hemoprotein reductase] + O2 = 2-hydroxyestrone + oxidized [NADPH--hemoprotein reductase] + H2O + H(+). It carries out the reaction estrone + reduced [NADPH--hemoprotein reductase] + O2 = 4-hydroxyestrone + oxidized [NADPH--hemoprotein reductase] + H2O + H(+). The enzyme catalyses cholesterol + reduced [NADPH--hemoprotein reductase] + O2 = 25-hydroxycholesterol + oxidized [NADPH--hemoprotein reductase] + H2O + H(+). The catalysed reaction is all-trans-retinol + reduced [NADPH--hemoprotein reductase] + O2 = all-trans-retinal + oxidized [NADPH--hemoprotein reductase] + 2 H2O + H(+). It catalyses the reaction all-trans-retinal + reduced [NADPH--hemoprotein reductase] + O2 = all-trans-retinoate + oxidized [NADPH--hemoprotein reductase] + H2O + 2 H(+). It carries out the reaction (5Z,8Z,11Z,14Z)-eicosatetraenoate + reduced [NADPH--hemoprotein reductase] + O2 = (14R,15S)-epoxy-(5Z,8Z,11Z)-eicosatrienoate + oxidized [NADPH--hemoprotein reductase] + H2O + H(+). The enzyme catalyses (5Z,8Z,11Z,14Z)-eicosatetraenoate + reduced [NADPH--hemoprotein reductase] + O2 = (14S,15R)-epoxy-(5Z,8Z,11Z)-eicosatrienoate + oxidized [NADPH--hemoprotein reductase] + H2O + H(+). The catalysed reaction is (5Z,8Z,11Z,14Z,17Z)-eicosapentaenoate + reduced [NADPH--hemoprotein reductase] + O2 = (17R,18S)-epoxy-(5Z,8Z,11Z,14Z)-eicosatetraenoate + oxidized [NADPH--hemoprotein reductase] + H2O + H(+). It catalyses the reaction (4Z,7Z,10Z,13Z,16Z,19Z)-docosahexaenoate + reduced [NADPH--hemoprotein reductase] + O2 = (19R,20S)-epoxy-(4Z,7Z,10Z,13Z,16Z)-docosapentaenoate + oxidized [NADPH--hemoprotein reductase] + H2O + H(+). It carries out the reaction (5S)-hydroperoxy-(6E,8Z,11Z,14Z)-eicosatetraenoate = 5-oxo-(6E,8Z,11Z,14Z)-eicosatetraenoate + H2O. The enzyme catalyses (12S)-hydroperoxy-(5Z,8Z,10E,14Z)-eicosatetraenoate = 12-oxo-(5Z,8Z,10E,14Z)-eicosatetraenoate + H2O. The catalysed reaction is (15S)-hydroperoxy-(5Z,8Z,11Z,13E)-eicosatetraenoate = 15-oxo-(5Z,8Z,11Z,13E)-eicosatetraenoate + H2O. It catalyses the reaction (13S)-hydroperoxy-(9Z,11E)-octadecadienoate = 13-oxo-(9Z,11E)-octadecadienoate + H2O. It carries out the reaction (5Z,8Z,11Z,14Z)-eicosatetraenoate + reduced [NADPH--hemoprotein reductase] + O2 = 13-hydroxy-(5Z,8Z,11Z,14Z)-eicosatetraenoate + oxidized [NADPH--hemoprotein reductase] + H2O + H(+). The enzyme catalyses (5Z,8Z,11Z,14Z)-eicosatetraenoate + reduced [NADPH--hemoprotein reductase] + O2 = 19-hydroxy-(5Z,8Z,11Z,14Z)-eicosatetraenoate + oxidized [NADPH--hemoprotein reductase] + H2O + H(+). The catalysed reaction is (9Z,12Z)-octadecadienoate + reduced [NADPH--hemoprotein reductase] + O2 = 11-hydroxy-(9Z,12Z)-octadecadienoate + oxidized [NADPH--hemoprotein reductase] + H2O + H(+). It participates in cofactor metabolism; retinol metabolism. The protein operates within steroid metabolism; cholesterol metabolism. Its pathway is lipid metabolism; arachidonate metabolism. A cytochrome P450 monooxygenase involved in the metabolism of various endogenous substrates, including fatty acids, steroid hormones and vitamins. Mechanistically, uses molecular oxygen inserting one oxygen atom into a substrate, and reducing the second into a water molecule, with two electrons provided by NADPH via cytochrome P450 reductase (NADPH--hemoprotein reductase). Catalyzes the hydroxylation of carbon-hydrogen bonds. Exhibits high catalytic activity for the formation of hydroxyestrogens from estrone (E1) and 17beta-estradiol (E2), namely 2-hydroxy E1 and E2. Metabolizes cholesterol toward 25-hydroxycholesterol, a physiological regulator of cellular cholesterol homeostasis. May act as a major enzyme for all-trans retinoic acid biosynthesis in the liver. Catalyzes two successive oxidative transformation of all-trans retinol to all-trans retinal and then to the active form all-trans retinoic acid. Primarily catalyzes stereoselective epoxidation of the last double bond of polyunsaturated fatty acids (PUFA), displaying a strong preference for the (R,S) stereoisomer. Catalyzes bisallylic hydroxylation and omega-1 hydroxylation of PUFA. May also participate in eicosanoids metabolism by converting hydroperoxide species into oxo metabolites (lipoxygenase-like reaction, NADPH-independent). Plays a role in the oxidative metabolism of xenobiotics. Catalyzes the N-hydroxylation of heterocyclic amines and the O-deethylation of phenacetin. Metabolizes caffeine via N3-demethylation. The polypeptide is Cytochrome P450 1A2 (CYP1A2) (Mesocricetus auratus (Golden hamster)).